The chain runs to 1001 residues: uncharacterized protein (1001 aa).

Residues 939–948 (KVVDNKRDAS) show a composition bias toward basic and acidic residues. Residues 939 to 1001 (KVVDNKRDAS…HTSKRVQKKN (63 aa)) are disordered. Phosphoserine occurs at positions 948 and 950.

This is an uncharacterized protein from Schizosaccharomyces pombe (strain 972 / ATCC 24843) (Fission yeast).